A 103-amino-acid polypeptide reads, in one-letter code: Leukocyte cysteine proteinase inhibitor 1 (103 aa).

At Met1 the chain carries Blocked amino end (Met); partial. The tract at residues 1–20 (MESEEMLAGGLTEPRPATPE) is disordered. A Secondary area of contact motif is present at residues 51 to 55 (QVVAG).

The protein belongs to the cystatin family.

It is found in the cytoplasm. Functionally, potent inhibitor of cathepsins L and S, and papain. The protein is Leukocyte cysteine proteinase inhibitor 1 of Sus scrofa (Pig).